The following is a 126-amino-acid chain: Small ribosomal subunit protein uS13 (126 aa).

Residues 98-126 (VRGQSTKNNARTRKGKRKTVANKKKAAKK) are disordered. A compositionally biased stretch (basic residues) spans 107-126 (ARTRKGKRKTVANKKKAAKK).

It belongs to the universal ribosomal protein uS13 family. Part of the 30S ribosomal subunit. Forms a loose heterodimer with protein S19. Forms two bridges to the 50S subunit in the 70S ribosome.

Its function is as follows. Located at the top of the head of the 30S subunit, it contacts several helices of the 16S rRNA. In the 70S ribosome it contacts the 23S rRNA (bridge B1a) and protein L5 of the 50S subunit (bridge B1b), connecting the 2 subunits; these bridges are implicated in subunit movement. Contacts the tRNAs in the A and P-sites. In Amoebophilus asiaticus (strain 5a2), this protein is Small ribosomal subunit protein uS13.